Reading from the N-terminus, the 183-residue chain is Ribosome rescue factor SmrB (183 aa).

In terms of domain architecture, Smr spans 98-173; that stretch reads LDLHGLTQQQ…GDAALLVLIE (76 aa).

Belongs to the SmrB family. As to quaternary structure, associates with collided ribosomes, but not with correctly translating polysomes.

Functionally, acts as a ribosome collision sensor. Detects stalled/collided disomes (pairs of ribosomes where the leading ribosome is stalled and a second ribosome has collided with it) and endonucleolytically cleaves mRNA at the 5' boundary of the stalled ribosome. Stalled/collided disomes form a new interface (primarily via the 30S subunits) that binds SmrB. Cleaved mRNA becomes available for tmRNA ligation, leading to ribosomal subunit dissociation and rescue of stalled ribosomes. In Klebsiella pneumoniae (strain 342), this protein is Ribosome rescue factor SmrB.